The following is a 246-amino-acid chain: Ribonuclease PH (246 aa).

Residues Arg-91 and 129–131 (GTR) each bind phosphate.

It belongs to the RNase PH family. As to quaternary structure, homohexameric ring arranged as a trimer of dimers.

The enzyme catalyses tRNA(n+1) + phosphate = tRNA(n) + a ribonucleoside 5'-diphosphate. Functionally, phosphorolytic 3'-5' exoribonuclease that plays an important role in tRNA 3'-end maturation. Removes nucleotide residues following the 3'-CCA terminus of tRNAs; can also add nucleotides to the ends of RNA molecules by using nucleoside diphosphates as substrates, but this may not be physiologically important. Probably plays a role in initiation of 16S rRNA degradation (leading to ribosome degradation) during starvation. In Paraburkholderia phytofirmans (strain DSM 17436 / LMG 22146 / PsJN) (Burkholderia phytofirmans), this protein is Ribonuclease PH.